An 869-amino-acid polypeptide reads, in one-letter code: H(+)/Cl(-) exchange transporter 6 (869 aa).

Over M1–K80 the chain is Cytoplasmic. The next 2 helical transmembrane spans lie at W81–V113 and L128–I150. The short motif at G156–P160 is the Selectivity filter part_1 element. Position 157 (S157) interacts with chloride. The segment at residues I159 to L166 is an intramembrane region (helical). The next 2 membrane-spanning stretches (helical) occupy residues R176–G194 and E200–F217. Positions G198–P202 match the Selectivity filter part_2 motif. Intramembrane regions (helical) lie at residues F241 to A253 and P257 to L265. Helical transmembrane passes span T277–F294, G335–R364, and K371–A392. 3 N-linked (GlcNAc...) asparagine glycosylation sites follow: N410, N422, and N432. The next 2 membrane-spanning stretches (helical) occupy residues P462–G481 and G487–I511. Residues G487–P491 carry the Selectivity filter part_3 motif. Position 489 (F489) interacts with chloride. The helical intramembrane region spans G519–V533. The segment at residues V534–M536 is an intramembrane region (note=Loop between two helices). Positions T537–T548 form an intramembrane region, helical. An intramembrane region (note=Loop between two helices) is located at residues N549–T552. A helical membrane pass occupies residues Y553 to F571. The Cytoplasmic segment spans residues N572 to I869. Y576 is a chloride binding site. The 58-residue stretch at M605–S662 folds into the CBS 1 domain. Position 630 to 632 (H630 to A632) interacts with ATP. The interval A668 to R687 is disordered. A compositionally biased stretch (polar residues) spans S677–L686. S773 carries the phosphoserine modification. Positions M807–T868 constitute a CBS 2 domain. T849–N852 is a binding site for ATP.

It belongs to the chloride channel (TC 2.A.49) family. ClC-6/CLCN6 subfamily. N-glycosylated on several asparagine residues.

The protein resides in the late endosome membrane. It catalyses the reaction 2 chloride(in) + H(+)(out) = 2 chloride(out) + H(+)(in). Its function is as follows. Voltage-gated channel mediating the exchange of chloride ions against protons. Functions as antiporter and contributes to the acidification of the late endosome lumen. The CLC channel family contains both chloride channels and proton-coupled anion transporters that exchange chloride or another anion for protons. The presence of conserved gating glutamate residues is typical for family members that function as antiporters. This is H(+)/Cl(-) exchange transporter 6 (CLCN6) from Oryctolagus cuniculus (Rabbit).